Consider the following 216-residue polypeptide: Snake venom metalloproteinase HT-1 (216 aa).

One can recognise a Disintegrin domain in the interval 8 to 94 (PPVCGNELLE…DCPMDDFHRN (87 aa)). Residues V10, N13, L15, E17, E20, and D23 each contribute to the Ca(2+) site. 14 disulfide bridges follow: C11/C40, C22/C35, C24/C30, C34/C57, C48/C54, C53/C79, C66/C86, C73/C105, C98/C110, C117/C167, C132/C178, C145/C155, C162/C204, and C198/C209. Residues 72-74 (ECD) carry the D/ECD-tripeptide motif. N175 carries N-linked (GlcNAc...) asparagine glycosylation.

It belongs to the venom metalloproteinase (M12B) family. P-III subfamily. P-IIIa sub-subfamily. As to quaternary structure, monomer. The cofactor is Zn(2+). As to expression, expressed by the venom gland.

The protein resides in the secreted. Its function is as follows. Zinc protease from snake venom that induces hemorrhage. The sequence is that of Snake venom metalloproteinase HT-1 from Crotalus ruber ruber (Red diamond rattlesnake).